The following is a 393-amino-acid chain: Putative N(4)-(beta-N-acetylglucosaminyl)-L-asparaginase GM21137 (393 aa).

The first 23 residues, 1 to 23 (MRTHLRASLWVLCLASTAFSILA), serve as a signal peptide directing secretion. 2 disulfides stabilise this stretch: Cys97–Cys102 and Cys196–Cys212. Thr243 (nucleophile) is an active-site residue. Substrate is bound by residues 271-274 (RVGD) and 294-297 (TGDG). The cysteines at positions 354 and 381 are disulfide-linked.

Belongs to the Ntn-hydrolase family. Heterotetramer of two alpha and two beta chains arranged as a dimer of alpha/beta heterodimers. Cleaved into an alpha and beta chain by autocatalysis; this activates the enzyme. The N-terminal residue of the beta subunit is responsible for the nucleophile hydrolase activity.

The enzyme catalyses N(4)-(beta-N-acetyl-D-glucosaminyl)-L-asparagine + H2O = N-acetyl-beta-D-glucosaminylamine + L-aspartate + H(+). In terms of biological role, cleaves the GlcNAc-Asn bond which joins oligosaccharides to the peptide of asparagine-linked glycoproteins. The polypeptide is Putative N(4)-(beta-N-acetylglucosaminyl)-L-asparaginase GM21137 (Drosophila sechellia (Fruit fly)).